Consider the following 348-residue polypeptide: tRNA N6-adenosine threonylcarbamoyltransferase (348 aa).

The Fe cation site is built by H111 and H115. Substrate contacts are provided by residues 134–138, D167, G180, D184, and N280; that span reads LVSGG. Fe cation is bound at residue D308.

Belongs to the KAE1 / TsaD family. The cofactor is Fe(2+).

The protein resides in the cytoplasm. It catalyses the reaction L-threonylcarbamoyladenylate + adenosine(37) in tRNA = N(6)-L-threonylcarbamoyladenosine(37) in tRNA + AMP + H(+). Required for the formation of a threonylcarbamoyl group on adenosine at position 37 (t(6)A37) in tRNAs that read codons beginning with adenine. Is involved in the transfer of the threonylcarbamoyl moiety of threonylcarbamoyl-AMP (TC-AMP) to the N6 group of A37, together with TsaE and TsaB. TsaD likely plays a direct catalytic role in this reaction. The sequence is that of tRNA N6-adenosine threonylcarbamoyltransferase from Rippkaea orientalis (strain PCC 8801 / RF-1) (Cyanothece sp. (strain PCC 8801)).